An 88-amino-acid polypeptide reads, in one-letter code: MVKLRLKRCGRKQRAVYRIVAIDVRSRREGKDLQKVGFYDPIKNQTYLNVPAILYFLEKGAQPTETVQDILKKAEVFKELRLNQPKFN.

The protein belongs to the bacterial ribosomal protein bS16 family.

The protein localises to the plastid. It is found in the chloroplast. In Solanum bulbocastanum (Wild potato), this protein is Small ribosomal subunit protein bS16c.